Consider the following 421-residue polypeptide: Alpha-1-antiproteinase 2 (421 aa).

The first 24 residues, 1–24, serve as a signal peptide directing secretion; that stretch reads MPSSVPWCLLLLAGLCCLVPSSLA. Asn-73, Asn-110, and Asn-274 each carry an N-linked (GlcNAc...) asparagine glycan. Residues 376 to 395 are RCL; it reads GTTMWEIMPISLPPDLKFNR.

It belongs to the serpin family. Post-translationally, N-glycosylated with carbohydrates having biantennary side chains. Plasma.

It is found in the secreted. Functionally, inhibitor of serine proteases. The sequence is that of Alpha-1-antiproteinase 2 from Equus caballus (Horse).